Here is a 588-residue protein sequence, read N- to C-terminus: Phosphatidylinositol-3,5-bisphosphate 3-phosphatase mtm-1 (588 aa).

The GRAM domain occupies 20 to 91; it reads IQESIDLKLL…GQVSRIEKVG (72 aa). The region spanning 164–543 is the Myotubularin phosphatase domain; that stretch reads GWKIYSAEKE…CGLHVWIDYY (380 aa). 3 residues coordinate a 1,2-diacyl-sn-glycero-3-phospho-(1D-myo-inositol-3,5-bisphosphate): N293, N316, and I317. A 1,2-diacyl-sn-glycero-3-phospho-(1D-myo-inositol-3-phosphate)-binding residues include N293, N316, and I317. C378 (phosphocysteine intermediate) is an active-site residue. A 1,2-diacyl-sn-glycero-3-phospho-(1D-myo-inositol-3,5-bisphosphate) is bound by residues S379, D380, G381, W382, D383, R384, K420, and R424. Positions 379, 380, 381, 382, 383, and 384 each coordinate a 1,2-diacyl-sn-glycero-3-phospho-(1D-myo-inositol-3-phosphate). Position 379 (S379) interacts with phosphate. Phosphate is bound by residues G381, W382, D383, and R384. An a 1,2-diacyl-sn-glycero-3-phospho-(1D-myo-inositol-3-phosphate)-binding site is contributed by R424. Positions 563–588 form a coiled coil; it reads AQFVDEKKQLLDEIMALDDAAQKLTA.

This sequence belongs to the protein-tyrosine phosphatase family. Non-receptor class myotubularin subfamily. As to expression, expressed in embryo, larva and in adults. Expressed in a few head and tail neurons. Expressed in hypodermis, body wall and pharyngeal muscles, sheath cells, vulva, distal tip cells and coelomocytes.

It is found in the cell membrane. The protein localises to the cell projection. It localises to the phagocytic cup. Its subcellular location is the apical cell membrane. The protein resides in the cytoplasmic granule membrane. It catalyses the reaction a 1,2-diacyl-sn-glycero-3-phospho-(1D-myo-inositol-3,5-bisphosphate) + H2O = a 1,2-diacyl-sn-glycero-3-phospho-(1D-myo-inositol-5-phosphate) + phosphate. It carries out the reaction a 1,2-diacyl-sn-glycero-3-phospho-(1D-myo-inositol-3-phosphate) + H2O = a 1,2-diacyl-sn-glycero-3-phospho-(1D-myo-inositol) + phosphate. The enzyme catalyses 1,2-dioctanoyl-sn-glycero-3-phospho-(1-D-myo-inositol-3-phosphate) + H2O = 1,2-dioctanoyl-sn-glycero-3-phospho-(1D-myo-inositol) + phosphate. Functionally, lipid phosphatase that specifically dephosphorylates phosphatidylinositol 3-phosphate (PI3P) and phosphatidylinositol 3,5-bisphosphate (PI(3,5)P2). Negatively regulates accumulation of PI3P on intracellular vesicles. Negatively regulates phagocytosis of apoptotic cells probably by limiting the recruitment and/or the activation of ced-5, ced-2 and ced-12 complex. In addition, may positively regulate phagosome maturation by promoting recycling of apoptotic receptor ced-1 back to the plasma membrane. Essential for embryonic and larval development. May promote migration of distal tip cells. This Caenorhabditis elegans protein is Phosphatidylinositol-3,5-bisphosphate 3-phosphatase mtm-1.